The chain runs to 154 residues: 6,7-dimethyl-8-ribityllumazine synthase (154 aa).

5-amino-6-(D-ribitylamino)uracil is bound by residues F22, 56–58 (AFE), and 80–82 (AVI). (2S)-2-hydroxy-3-oxobutyl phosphate is bound at residue 85–86 (AT). H88 acts as the Proton donor in catalysis. Residue F113 participates in 5-amino-6-(D-ribitylamino)uracil binding. R127 is a (2S)-2-hydroxy-3-oxobutyl phosphate binding site.

The protein belongs to the DMRL synthase family. As to quaternary structure, forms an icosahedral capsid composed of 60 subunits, arranged as a dodecamer of pentamers.

It catalyses the reaction (2S)-2-hydroxy-3-oxobutyl phosphate + 5-amino-6-(D-ribitylamino)uracil = 6,7-dimethyl-8-(1-D-ribityl)lumazine + phosphate + 2 H2O + H(+). Its pathway is cofactor biosynthesis; riboflavin biosynthesis; riboflavin from 2-hydroxy-3-oxobutyl phosphate and 5-amino-6-(D-ribitylamino)uracil: step 1/2. Functionally, catalyzes the formation of 6,7-dimethyl-8-ribityllumazine by condensation of 5-amino-6-(D-ribitylamino)uracil with 3,4-dihydroxy-2-butanone 4-phosphate. This is the penultimate step in the biosynthesis of riboflavin. The polypeptide is 6,7-dimethyl-8-ribityllumazine synthase (Anoxybacillus flavithermus (strain DSM 21510 / WK1)).